The primary structure comprises 84 residues: MGSMSPVHWLILAVVLLVVFGGGGKISGLMGDFAKGIKSFKKNMADDESMTATDATQAPGHISPPNQNPGYSQTTSSETHRNQV.

The helical transmembrane segment at 4-24 (MSPVHWLILAVVLLVVFGGGG) threads the bilayer. Positions 46-84 (DDESMTATDATQAPGHISPPNQNPGYSQTTSSETHRNQV) are disordered. The span at 64-77 (PPNQNPGYSQTTSS) shows a compositional bias: polar residues.

This sequence belongs to the TatA/E family. In terms of assembly, the Tat system comprises two distinct complexes: a TatABC complex, containing multiple copies of TatA, TatB and TatC subunits, and a separate TatA complex, containing only TatA subunits. Substrates initially bind to the TatABC complex, which probably triggers association of the separate TatA complex to form the active translocon.

It localises to the cell inner membrane. In terms of biological role, part of the twin-arginine translocation (Tat) system that transports large folded proteins containing a characteristic twin-arginine motif in their signal peptide across membranes. TatA could form the protein-conducting channel of the Tat system. This Gluconobacter oxydans (strain 621H) (Gluconobacter suboxydans) protein is Sec-independent protein translocase protein TatA.